The sequence spans 289 residues: Methionyl-tRNA formyltransferase (289 aa).

106 to 109 (SLLP) contacts (6S)-5,6,7,8-tetrahydrofolate.

Belongs to the Fmt family.

It catalyses the reaction L-methionyl-tRNA(fMet) + (6R)-10-formyltetrahydrofolate = N-formyl-L-methionyl-tRNA(fMet) + (6S)-5,6,7,8-tetrahydrofolate + H(+). In terms of biological role, attaches a formyl group to the free amino group of methionyl-tRNA(fMet). The formyl group appears to play a dual role in the initiator identity of N-formylmethionyl-tRNA by promoting its recognition by IF2 and preventing the misappropriation of this tRNA by the elongation apparatus. The polypeptide is Methionyl-tRNA formyltransferase (Mycoplasmopsis pulmonis (strain UAB CTIP) (Mycoplasma pulmonis)).